The following is a 444-amino-acid chain: 23S rRNA (uracil(1939)-C(5))-methyltransferase RlmD (444 aa).

In terms of domain architecture, TRAM spans 5–67 (RSRIDRTPFQ…RHFDEARTVE (63 aa)). [4Fe-4S] cluster contacts are provided by cysteine 80, cysteine 86, cysteine 89, and cysteine 168. 6 residues coordinate S-adenosyl-L-methionine: glutamine 276, phenylalanine 305, asparagine 310, glutamate 326, aspartate 353, and aspartate 374. The active-site Nucleophile is the cysteine 400.

It belongs to the class I-like SAM-binding methyltransferase superfamily. RNA M5U methyltransferase family. RlmD subfamily.

It catalyses the reaction uridine(1939) in 23S rRNA + S-adenosyl-L-methionine = 5-methyluridine(1939) in 23S rRNA + S-adenosyl-L-homocysteine + H(+). Catalyzes the formation of 5-methyl-uridine at position 1939 (m5U1939) in 23S rRNA. The polypeptide is 23S rRNA (uracil(1939)-C(5))-methyltransferase RlmD (Stenotrophomonas maltophilia (strain K279a)).